Consider the following 612-residue polypeptide: DEAD-box ATP-dependent RNA helicase 11 (612 aa).

Disordered stretches follow at residues 1 to 70 (MSAS…SGGG) and 83 to 104 (GAGG…WDRR). An N-acetylserine modification is found at S2. Gly residues-rich tracts occupy residues 61 to 70 (SGGGGASGGG) and 83 to 94 (GAGGGGGGGGGW). The Q motif signature appears at 151-179 (NTFADIDLGDALNLNIRRCKYVRPTPVQR). The Helicase ATP-binding domain occupies 182-366 (IPILLAERDL…ADFMSNYIFL (185 aa)). 195–202 (AQTGSGKT) contributes to the ATP binding site. Residues 310 to 313 (DEAD) carry the DEAD box motif. Residues 377-542 (LITQRVEFVQ…EVPEWLTRYA (166 aa)) form the Helicase C-terminal domain. The disordered stretch occupies residues 547–583 (FGGGKKRSGGRFGGRDFRREGSYSRGGGGGGGGGGSD). The segment covering 559 to 568 (GGRDFRREGS) has biased composition (basic and acidic residues). Residues 570–583 (SRGGGGGGGGGGSD) are compositionally biased toward gly residues.

Belongs to the DEAD box helicase family. DDX3/DED1 subfamily.

The enzyme catalyses ATP + H2O = ADP + phosphate + H(+). The sequence is that of DEAD-box ATP-dependent RNA helicase 11 (RH11) from Arabidopsis thaliana (Mouse-ear cress).